The chain runs to 454 residues: Isthmin-1 (454 aa).

The N-terminal stretch at 1 to 29 (MVRLAAELLLLLGLLLLTLHITVLRGSGA) is a signal peptide. Disordered stretches follow at residues 29–93 (ASDR…PRSF), 125–144 (PDSE…WSLP), and 161–209 (TNSG…STDG). A compositionally biased stretch (polar residues) spans 38 to 55 (GNNNLNLESDSTSETSFP). The segment covering 128–137 (EAEKDQHPEN) has biased composition (basic and acidic residues). One can recognise a TSP type-1 domain in the interval 208–252 (DGEGDWSLWSVCSVTCGNGNQKRTRSCGYACIATESRTCDRPNCP). 3 disulfide bridges follow: Cys219–Cys246, Cys223–Cys251, and Cys234–Cys238. The 164-residue stretch at 279–442 (LFEVDMDSCE…QKCTESPSDE (164 aa)) folds into the AMOP domain.

This sequence belongs to the isthmin family. As to quaternary structure, interacts with integrin ITGAV/ITGB5.

It localises to the secreted. In terms of biological role, acts as an angiogenesis inhibitor. This Mus musculus (Mouse) protein is Isthmin-1 (Ism1).